Here is a 209-residue protein sequence, read N- to C-terminus: Imidazole glycerol phosphate synthase subunit HisH (209 aa).

Residues 1–205 (MIAIIDYGMG…KGVVKQWKSS (205 aa)) form the Glutamine amidotransferase type-1 domain. C79 serves as the catalytic Nucleophile. Residues H180 and E182 contribute to the active site.

Heterodimer of HisH and HisF.

It is found in the cytoplasm. It carries out the reaction 5-[(5-phospho-1-deoxy-D-ribulos-1-ylimino)methylamino]-1-(5-phospho-beta-D-ribosyl)imidazole-4-carboxamide + L-glutamine = D-erythro-1-(imidazol-4-yl)glycerol 3-phosphate + 5-amino-1-(5-phospho-beta-D-ribosyl)imidazole-4-carboxamide + L-glutamate + H(+). It catalyses the reaction L-glutamine + H2O = L-glutamate + NH4(+). Its pathway is amino-acid biosynthesis; L-histidine biosynthesis; L-histidine from 5-phospho-alpha-D-ribose 1-diphosphate: step 5/9. Functionally, IGPS catalyzes the conversion of PRFAR and glutamine to IGP, AICAR and glutamate. The HisH subunit catalyzes the hydrolysis of glutamine to glutamate and ammonia as part of the synthesis of IGP and AICAR. The resulting ammonia molecule is channeled to the active site of HisF. The chain is Imidazole glycerol phosphate synthase subunit HisH from Bacillus cytotoxicus (strain DSM 22905 / CIP 110041 / 391-98 / NVH 391-98).